Consider the following 225-residue polypeptide: Cytidylate kinase (225 aa).

Residue 12–20 (GPSGAGKGT) coordinates ATP.

The protein belongs to the cytidylate kinase family. Type 1 subfamily.

It localises to the cytoplasm. It catalyses the reaction CMP + ATP = CDP + ADP. It carries out the reaction dCMP + ATP = dCDP + ADP. The protein is Cytidylate kinase of Edwardsiella ictaluri (strain 93-146).